The following is a 635-amino-acid chain: MTDQKHPLLAGLQDATPLANWSSTELSNAAVEIRDVLCNLLATRTAHFASNLGVVELCLALHSEFDFRTDRLIWDTGHQVYPHKLVTGRYDRFETIRTAGGLMGYPNPHESVYDLFMTGHAGCSVSTAVGLRSGDILMDQKDRRTVAVIGDGAFPCGVVFEALNNAGELGDDLTIILNDNKMSICHRTGSVAQYLDRLRGNPFYTGLKHEVTKLLDRVPMFGDPAERLLAQMKEGVKAGLLGGMLFEELGIRYIGPIDGHDIPLMQKYLRLCKETPGPVLLHVVTEKGHGYKPAAEDPVFFHTPPAFEDRGGTPVTRGSDGRPPYTTHARDAIGEAMKRDSRVTVITAAMCQGNKLEPVREQFPERFFDVGICESHAVAFAAGQCKTGMRPIVDIYSTFLQRSYDQIFQEVALQDLPVVFMMDRAGLTAPDGPTHHGVYDIGYMRLFPNLVLMAPGYAEELSMMLDKALTLDHPSGIRYPKASALEATHTPAPIEIGKAEWIREGTDGTIVAYGAMLEQAIAAAEQLEGELEIGVVNARFVKPIDAEMVHKTLSDGRFVVTLEEGTRVGGFGSAFLESAVDQRLDTRAVHRLALPDEFVLHGDRSQLLDQSTLSAQKIAEVCREAASEVGSQVGI.

Thiamine diphosphate is bound by residues His78 and 119-121 (GHA). Asp151 contributes to the Mg(2+) binding site. Residues 152–153 (GA), Asn180, and Tyr291 contribute to the thiamine diphosphate site. Asn180 provides a ligand contact to Mg(2+). A disordered region spans residues 305-325 (PAFEDRGGTPVTRGSDGRPPY). Glu374 lines the thiamine diphosphate pocket.

The protein belongs to the transketolase family. DXPS subfamily. Homodimer. Requires Mg(2+) as cofactor. Thiamine diphosphate serves as cofactor.

It catalyses the reaction D-glyceraldehyde 3-phosphate + pyruvate + H(+) = 1-deoxy-D-xylulose 5-phosphate + CO2. It functions in the pathway metabolic intermediate biosynthesis; 1-deoxy-D-xylulose 5-phosphate biosynthesis; 1-deoxy-D-xylulose 5-phosphate from D-glyceraldehyde 3-phosphate and pyruvate: step 1/1. Catalyzes the acyloin condensation reaction between C atoms 2 and 3 of pyruvate and glyceraldehyde 3-phosphate to yield 1-deoxy-D-xylulose-5-phosphate (DXP). The protein is 1-deoxy-D-xylulose-5-phosphate synthase of Rhodopirellula baltica (strain DSM 10527 / NCIMB 13988 / SH1).